Reading from the N-terminus, the 195-residue chain is Transcriptional regulator GfcR (195 aa).

It belongs to the purine/pyrimidine phosphoribosyltransferase family. GfcR subfamily.

The polypeptide is Transcriptional regulator GfcR (Archaeoglobus fulgidus (strain ATCC 49558 / DSM 4304 / JCM 9628 / NBRC 100126 / VC-16)).